A 384-amino-acid chain; its full sequence is 8-amino-7-oxononanoate synthase (384 aa).

Position 21 (Arg21) interacts with substrate. 108–109 (GF) contacts pyridoxal 5'-phosphate. His133 is a substrate binding site. Residues Ser179, His207, and Thr233 each contribute to the pyridoxal 5'-phosphate site. N6-(pyridoxal phosphate)lysine is present on Lys236. Thr352 is a substrate binding site.

It belongs to the class-II pyridoxal-phosphate-dependent aminotransferase family. BioF subfamily. As to quaternary structure, homodimer. The cofactor is pyridoxal 5'-phosphate.

The catalysed reaction is 6-carboxyhexanoyl-[ACP] + L-alanine + H(+) = (8S)-8-amino-7-oxononanoate + holo-[ACP] + CO2. It participates in cofactor biosynthesis; biotin biosynthesis. Catalyzes the decarboxylative condensation of pimeloyl-[acyl-carrier protein] and L-alanine to produce 8-amino-7-oxononanoate (AON), [acyl-carrier protein], and carbon dioxide. This chain is 8-amino-7-oxononanoate synthase, found in Shigella boydii serotype 18 (strain CDC 3083-94 / BS512).